A 373-amino-acid chain; its full sequence is tRNA-specific 2-thiouridylase MnmA (373 aa).

ATP-binding positions include 12–19 (GMSGGVDS) and methionine 38. The interval 98-100 (NPD) is interaction with target base in tRNA. Residue cysteine 103 is the Nucleophile of the active site. A disulfide bridge connects residues cysteine 103 and cysteine 200. Residue glycine 127 participates in ATP binding. The interaction with tRNA stretch occupies residues 150–152 (KDQ). Residue cysteine 200 is the Cysteine persulfide intermediate of the active site. Residues 312–313 (RY) are interaction with tRNA.

The protein belongs to the MnmA/TRMU family.

It is found in the cytoplasm. The catalysed reaction is S-sulfanyl-L-cysteinyl-[protein] + uridine(34) in tRNA + AH2 + ATP = 2-thiouridine(34) in tRNA + L-cysteinyl-[protein] + A + AMP + diphosphate + H(+). In terms of biological role, catalyzes the 2-thiolation of uridine at the wobble position (U34) of tRNA, leading to the formation of s(2)U34. The chain is tRNA-specific 2-thiouridylase MnmA from Streptococcus uberis (strain ATCC BAA-854 / 0140J).